Reading from the N-terminus, the 271-residue chain is Phosphonoacetaldehyde hydrolase (271 aa).

Asp-12 functions as the Nucleophile in the catalytic mechanism. Residues Asp-12 and Ala-14 each contribute to the Mg(2+) site. Lys-54 serves as the catalytic Schiff-base intermediate with substrate. Asp-188 contributes to the Mg(2+) binding site.

It belongs to the HAD-like hydrolase superfamily. PhnX family. As to quaternary structure, homodimer. Mg(2+) is required as a cofactor.

It carries out the reaction phosphonoacetaldehyde + H2O = acetaldehyde + phosphate + H(+). Functionally, involved in phosphonate degradation. In Vibrio campbellii (strain ATCC BAA-1116), this protein is Phosphonoacetaldehyde hydrolase.